The following is a 577-amino-acid chain: Arginine--tRNA ligase (577 aa).

The 'HIGH' region signature appears at 122–132 (PNVAKEMHVGH).

It belongs to the class-I aminoacyl-tRNA synthetase family. Monomer.

The protein resides in the cytoplasm. It carries out the reaction tRNA(Arg) + L-arginine + ATP = L-arginyl-tRNA(Arg) + AMP + diphosphate. The sequence is that of Arginine--tRNA ligase from Escherichia coli O139:H28 (strain E24377A / ETEC).